Reading from the N-terminus, the 286-residue chain is Glycine--tRNA ligase alpha subunit (286 aa).

The protein belongs to the class-II aminoacyl-tRNA synthetase family. In terms of assembly, tetramer of two alpha and two beta subunits.

Its subcellular location is the cytoplasm. It catalyses the reaction tRNA(Gly) + glycine + ATP = glycyl-tRNA(Gly) + AMP + diphosphate. The polypeptide is Glycine--tRNA ligase alpha subunit (glyQ) (Thermotoga maritima (strain ATCC 43589 / DSM 3109 / JCM 10099 / NBRC 100826 / MSB8)).